Reading from the N-terminus, the 659-residue chain is Threonine--tRNA ligase (659 aa).

The TGS domain maps to 1-60 (MTVYLPDGKPLELPEGATAKDVARALGEGWERRAVGAIVDGELYDLLKPLPQGAKVRLLT). Catalytic stretches follow at residues 234-548 (TAEE…EHFA) and 252-552 (DHRR…GDFP). Zn(2+)-binding residues include cysteine 349, histidine 400, and histidine 529.

Belongs to the class-II aminoacyl-tRNA synthetase family. As to quaternary structure, homodimer. Zn(2+) serves as cofactor.

Its subcellular location is the cytoplasm. It carries out the reaction tRNA(Thr) + L-threonine + ATP = L-threonyl-tRNA(Thr) + AMP + diphosphate + H(+). Functionally, catalyzes the attachment of threonine to tRNA(Thr) in a two-step reaction: L-threonine is first activated by ATP to form Thr-AMP and then transferred to the acceptor end of tRNA(Thr). Also edits incorrectly charged L-seryl-tRNA(Thr). The chain is Threonine--tRNA ligase from Thermus thermophilus (strain ATCC 27634 / DSM 579 / HB8).